The primary structure comprises 146 residues: uncharacterized protein (146 aa).

The N-acetyltransferase domain occupies 7–146; it reads LDINYKTDEL…DGHDVLVWTP (140 aa).

This is an uncharacterized protein from Staphylococcus saprophyticus subsp. saprophyticus (strain ATCC 15305 / DSM 20229 / NCIMB 8711 / NCTC 7292 / S-41).